Here is a 122-residue protein sequence, read N- to C-terminus: Large ribosomal subunit protein uL14c (122 aa).

Belongs to the universal ribosomal protein uL14 family. In terms of assembly, part of the 50S ribosomal subunit.

The protein localises to the plastid. Its subcellular location is the chloroplast. Functionally, binds to 23S rRNA. This chain is Large ribosomal subunit protein uL14c, found in Anthoceros angustus (Hornwort).